Here is a 252-residue protein sequence, read N- to C-terminus: 2-succinyl-6-hydroxy-2,4-cyclohexadiene-1-carboxylate synthase (252 aa).

The protein belongs to the AB hydrolase superfamily. MenH family. Monomer.

It carries out the reaction 5-enolpyruvoyl-6-hydroxy-2-succinyl-cyclohex-3-ene-1-carboxylate = (1R,6R)-6-hydroxy-2-succinyl-cyclohexa-2,4-diene-1-carboxylate + pyruvate. The protein operates within quinol/quinone metabolism; 1,4-dihydroxy-2-naphthoate biosynthesis; 1,4-dihydroxy-2-naphthoate from chorismate: step 3/7. Its pathway is quinol/quinone metabolism; menaquinone biosynthesis. Functionally, catalyzes a proton abstraction reaction that results in 2,5-elimination of pyruvate from 2-succinyl-5-enolpyruvyl-6-hydroxy-3-cyclohexene-1-carboxylate (SEPHCHC) and the formation of 2-succinyl-6-hydroxy-2,4-cyclohexadiene-1-carboxylate (SHCHC). This chain is 2-succinyl-6-hydroxy-2,4-cyclohexadiene-1-carboxylate synthase, found in Shigella flexneri serotype 5b (strain 8401).